The following is a 212-amino-acid chain: Pyridoxine/pyridoxamine 5'-phosphate oxidase (212 aa).

FMN is bound by residues 59–64 (RMVLMK), 74–75 (YS), lysine 81, and glutamine 103. A substrate-binding site is contributed by lysine 64. Residues tyrosine 121 and arginine 125 each contribute to the substrate site. FMN-binding positions include 138–139 (QS) and tryptophan 183. 189-191 (RLH) provides a ligand contact to substrate. Arginine 193 contributes to the FMN binding site.

Belongs to the pyridoxamine 5'-phosphate oxidase family. Homodimer. FMN serves as cofactor.

The catalysed reaction is pyridoxamine 5'-phosphate + O2 + H2O = pyridoxal 5'-phosphate + H2O2 + NH4(+). The enzyme catalyses pyridoxine 5'-phosphate + O2 = pyridoxal 5'-phosphate + H2O2. Its pathway is cofactor metabolism; pyridoxal 5'-phosphate salvage; pyridoxal 5'-phosphate from pyridoxamine 5'-phosphate: step 1/1. It participates in cofactor metabolism; pyridoxal 5'-phosphate salvage; pyridoxal 5'-phosphate from pyridoxine 5'-phosphate: step 1/1. Catalyzes the oxidation of either pyridoxine 5'-phosphate (PNP) or pyridoxamine 5'-phosphate (PMP) into pyridoxal 5'-phosphate (PLP). The sequence is that of Pyridoxine/pyridoxamine 5'-phosphate oxidase from Rhodopseudomonas palustris (strain TIE-1).